The following is a 348-amino-acid chain: Protein pelota homolog (348 aa).

Belongs to the eukaryotic release factor 1 family. Pelota subfamily. In terms of assembly, monomer. The cofactor is a divalent metal cation.

The protein resides in the cytoplasm. Its function is as follows. May function in recognizing stalled ribosomes, interact with stem-loop structures in stalled mRNA molecules, and effect endonucleolytic cleavage of the mRNA. May play a role in the release non-functional ribosomes and degradation of damaged mRNAs. Has endoribonuclease activity. The polypeptide is Protein pelota homolog (Methanococcus maripaludis (strain DSM 14266 / JCM 13030 / NBRC 101832 / S2 / LL)).